The chain runs to 435 residues: Methylenetetrahydrofolate--tRNA-(uracil-5-)-methyltransferase TrmFO (435 aa).

FAD is bound at residue 9 to 14 (GAGLAG).

Belongs to the MnmG family. TrmFO subfamily. The cofactor is FAD.

The protein resides in the cytoplasm. It carries out the reaction uridine(54) in tRNA + (6R)-5,10-methylene-5,6,7,8-tetrahydrofolate + NADH + H(+) = 5-methyluridine(54) in tRNA + (6S)-5,6,7,8-tetrahydrofolate + NAD(+). The enzyme catalyses uridine(54) in tRNA + (6R)-5,10-methylene-5,6,7,8-tetrahydrofolate + NADPH + H(+) = 5-methyluridine(54) in tRNA + (6S)-5,6,7,8-tetrahydrofolate + NADP(+). Its function is as follows. Catalyzes the folate-dependent formation of 5-methyl-uridine at position 54 (M-5-U54) in all tRNAs. This Staphylococcus aureus (strain Newman) protein is Methylenetetrahydrofolate--tRNA-(uracil-5-)-methyltransferase TrmFO.